The following is a 955-amino-acid chain: Probable autotransporter YcgV (955 aa).

Residues 616-659 are disordered; that stretch reads ASGTVPEPTPNPEPTPAPAQPPIVNPDPTPEPAPTPKPTTTADA. Pro residues predominate over residues 622 to 652; the sequence is EPTPNPEPTPAPAQPPIVNPDPTPEPAPTPK. Residues 687–955 form the Autotransporter domain; sequence NQSKDGNIWL…QVNGGYRFSF (269 aa).

Its function is as follows. Upon overexpression shows increased adherence to polyvinyl chloride (PVC) plates, increased mature biofilm formation. This is Probable autotransporter YcgV (ycgV) from Escherichia coli (strain K12).